The following is a 107-amino-acid chain: Putative pterin-4-alpha-carbinolamine dehydratase (107 aa).

This sequence belongs to the pterin-4-alpha-carbinolamine dehydratase family.

It carries out the reaction (4aS,6R)-4a-hydroxy-L-erythro-5,6,7,8-tetrahydrobiopterin = (6R)-L-erythro-6,7-dihydrobiopterin + H2O. This chain is Putative pterin-4-alpha-carbinolamine dehydratase, found in Paracoccus denitrificans (strain Pd 1222).